Consider the following 63-residue polypeptide: Actiflagelin (63 aa).

5 disulfides stabilise this stretch: Cys3–Cys24, Cys6–Cys11, Cys17–Cys39, Cys43–Cys55, and Cys56–Cys61. Pro63 is modified (proline amide).

Contains 5 disulfide bonds. As to expression, expressed by the venom gland.

The protein resides in the secreted. Functionally, unknown. In vitro, this toxin activates sperm motility when tested on OF1 male mice. This Walterinnesia aegyptia (Desert black snake) protein is Actiflagelin.